A 203-amino-acid polypeptide reads, in one-letter code: Superoxide dismutase [Mn] (203 aa).

His-27, His-81, Asp-167, and His-171 together coordinate Mn(2+).

The protein belongs to the iron/manganese superoxide dismutase family. In terms of assembly, homodimer. The cofactor is Mn(2+).

The enzyme catalyses 2 superoxide + 2 H(+) = H2O2 + O2. Its function is as follows. Destroys superoxide anion radicals which are normally produced within the cells and which are toxic to biological systems. This Buchnera aphidicola subsp. Acyrthosiphon pisum (strain APS) (Acyrthosiphon pisum symbiotic bacterium) protein is Superoxide dismutase [Mn] (sodA).